Here is a 1201-residue protein sequence, read N- to C-terminus: Peroxisomal ATPase PEX6 (1201 aa).

The tract at residues 247-300 is disordered; that stretch reads LPSNNNNNNNNNNNNNNNNNNNNNNNNNNNNNNNNKEEEVEEEEVEVEEEEKDN. Residues 250-280 show a composition bias toward low complexity; the sequence is NNNNNNNNNNNNNNNNNNNNNNNNNNNNNNN. A compositionally biased stretch (acidic residues) spans 284-297; the sequence is EEVEEEEVEVEEEE. 959-966 provides a ligand contact to ATP; sequence GPPGTGKT.

It belongs to the AAA ATPase family. As to quaternary structure, interacts with PEX1; forming the PEX1-PEX6 AAA ATPase complex, which is composed of a heterohexamer formed by a trimer of PEX1-PEX6 dimers.

Its subcellular location is the cytoplasm. The protein localises to the cytosol. It is found in the peroxisome membrane. It catalyses the reaction ATP + H2O = ADP + phosphate + H(+). Functionally, component of the PEX1-PEX6 AAA ATPase complex, a protein dislocase complex that mediates the ATP-dependent extraction of the PEX5 receptor from peroxisomal membranes, an essential step for PEX5 recycling. Specifically recognizes PEX5 monoubiquitinated at 'Cys-11', and pulls it out of the peroxisome lumen through the PEX2-PEX10-PEX12 retrotranslocation channel. Extraction by the PEX1-PEX6 AAA ATPase complex is accompanied by unfolding of the TPR repeats and release of bound cargo from PEX5. The chain is Peroxisomal ATPase PEX6 (pex6) from Dictyostelium discoideum (Social amoeba).